A 373-amino-acid chain; its full sequence is MIWKQPPRRMGEMGGSLSRRFGNAAASWAVWRVSRSCFSLLFFFYFFLFFSSSSLLPTTNNYQHLQLHSLIPTLNTTAHLPHQQASSASMKASLFLACSALGLALATPTQDAPETVNNPLGIVYQAKLPETSRTGIRGTINATAHSSGRGVVFNLDLWGFDNTEGPFRKLHTCFDQTNKQTNKIVKLTTTTAYHIHVDPVPTDGSCGPTKDHLDPFGRGQTPPCDDSLPQTCEPGDLSGKFGRLTTSSMEEHFNQTFHDLYTSTRPGLGTFFGNRSIVIHHRNSTRLTCANFTLVEQPGTSTTYVPRPTGTGIISSIFPTGTGAISTSGHAPTISATYTPTPTPSPPAQNNGAGRLVGFSLGAIMAALVPLAL.

The signal sequence occupies residues 1 to 55; it reads MIWKQPPRRMGEMGGSLSRRFGNAAASWAVWRVSRSCFSLLFFFYFFLFFSSSSL. N-linked (GlcNAc...) asparagine glycosylation is found at N75 and N141. Cu cation-binding residues include H194, H196, and H212. A disulfide bridge connects residues C206 and C289. N-linked (GlcNAc...) asparagine glycosylation is found at N254 and N274. Cu cation is bound at residue H280. N-linked (GlcNAc...) asparagine glycosylation is found at N283 and N291. The tract at residues 329–348 is disordered; that stretch reads GHAPTISATYTPTPTPSPPA. A compositionally biased stretch (low complexity) spans 331–340; the sequence is APTISATYTP. G352 carries the GPI-anchor amidated glycine lipid modification. Positions 353–373 are cleaved as a propeptide — removed in mature form; it reads AGRLVGFSLGAIMAALVPLAL.

This sequence belongs to the Cu-Zn superoxide dismutase family. In terms of assembly, monomer. Cu cation serves as cofactor. In terms of processing, the GPI-anchor is attached to the protein in the endoplasmic reticulum and serves to target the protein to the cell surface. There, the glucosamine-inositol phospholipid moiety is cleaved off and the GPI-modified mannoprotein is covalently attached via its lipidless GPI glycan remnant to the 1,6-beta-glucan of the outer cell wall layer.

The protein resides in the secreted. Its subcellular location is the cell wall. It localises to the cell membrane. The catalysed reaction is 2 superoxide + 2 H(+) = H2O2 + O2. Functionally, superoxide dismutases serve to convert damaging superoxide radicals, a key form of ROS, to less damaging hydrogen peroxide that can be converted into water by catalase action. Degrades host-derived reactive oxygen species to escape innate immune surveillance. Involved in the occurrence of miconazole-tolerant persisters in biofilms. Persisters are cells that survive high doses of an antimicrobial agent. The unusual attributes of SOD5-like fungal proteins, including the absence of zinc and an open active site that readily captures extracellular copper, make these SODs well suited to meet challenges in zinc and copper availability at the host-pathogen interface. This Arthroderma benhamiae (strain ATCC MYA-4681 / CBS 112371) (Trichophyton mentagrophytes) protein is Cell surface Cu-only superoxide dismutase ARB_03674.